Here is a 355-residue protein sequence, read N- to C-terminus: UDP-3-O-acylglucosamine N-acyltransferase (355 aa).

The active-site Proton acceptor is the His258.

This sequence belongs to the transferase hexapeptide repeat family. LpxD subfamily. In terms of assembly, homotrimer.

The catalysed reaction is a UDP-3-O-[(3R)-3-hydroxyacyl]-alpha-D-glucosamine + a (3R)-hydroxyacyl-[ACP] = a UDP-2-N,3-O-bis[(3R)-3-hydroxyacyl]-alpha-D-glucosamine + holo-[ACP] + H(+). Its pathway is bacterial outer membrane biogenesis; LPS lipid A biosynthesis. Its function is as follows. Catalyzes the N-acylation of UDP-3-O-acylglucosamine using 3-hydroxyacyl-ACP as the acyl donor. Is involved in the biosynthesis of lipid A, a phosphorylated glycolipid that anchors the lipopolysaccharide to the outer membrane of the cell. The chain is UDP-3-O-acylglucosamine N-acyltransferase from Agrobacterium fabrum (strain C58 / ATCC 33970) (Agrobacterium tumefaciens (strain C58)).